A 437-amino-acid chain; its full sequence is MAAATGGLTPEQIIAVDGAHLWHPYSSIGREAVSPVVAVAAHGAWLTLIRDGQPIEVLDAMSSWWTAIHGHGHPALDQALTTQLRVMNHVMFGGLTHEPAARLAKLLVDITPAGLDTVFFSDSGSVSVEVAAKMALQYWRGRGLPGKRRLMTWRGGYHGDTFLAMSICDPHGGMHSLWTDVLAAQVFAPQVPRDYDPAYSAAFEAQLAQHAGELAAVVVEPVVQGAGGMRFHDPRYLHDLRDICRRYEVLLIFDEIATGFGRTGALFAADHAGVSPDIMCVGKALTGGYLSLAATLCTADVAHTISAGAAGALMHGPTFMANPLACAVSVASVELLLGQDWRTRITELAAGLTAGLDTARALPAVTDVRVCGAIGVIECDRPVDLAVATPAALDRGVWLRPFRNLVYAMPPYICTPAEITQITSAMVEVARLVGSLP.

Tryptophan 64 contributes to the substrate binding site. 124 to 125 contacts pyridoxal 5'-phosphate; that stretch reads GS. Tyrosine 157 provides a ligand contact to substrate. Pyridoxal 5'-phosphate is bound at residue aspartate 254. Substrate-binding residues include lysine 283 and glycine 316. N6-(pyridoxal phosphate)lysine is present on lysine 283. Position 317–318 (317–318) interacts with pyridoxal 5'-phosphate; the sequence is PT. Arginine 400 serves as a coordination point for substrate.

This sequence belongs to the class-III pyridoxal-phosphate-dependent aminotransferase family. BioA subfamily. Homodimer. Pyridoxal 5'-phosphate is required as a cofactor.

It is found in the cytoplasm. The enzyme catalyses (8S)-8-amino-7-oxononanoate + S-adenosyl-L-methionine = S-adenosyl-4-methylsulfanyl-2-oxobutanoate + (7R,8S)-7,8-diammoniononanoate. Its pathway is cofactor biosynthesis; biotin biosynthesis; 7,8-diaminononanoate from 8-amino-7-oxononanoate (SAM route): step 1/1. In terms of biological role, catalyzes the transfer of the alpha-amino group from S-adenosyl-L-methionine (SAM) to 7-keto-8-aminopelargonic acid (KAPA) to form 7,8-diaminopelargonic acid (DAPA). It is the only aminotransferase known to utilize SAM as an amino donor. The chain is Adenosylmethionine-8-amino-7-oxononanoate aminotransferase (bioA) from Mycobacterium tuberculosis (strain CDC 1551 / Oshkosh).